A 315-amino-acid polypeptide reads, in one-letter code: NAD-dependent protein lipoamidase sirtuin-4, mitochondrial (315 aa).

A mitochondrion-targeting transit peptide spans 1–29 (MRMSFGLTFKRTAKVHWRANFSQQCSLRS). The Deacetylase sirtuin-type domain occupies 38 to 315 (PPLDPEKVKE…GELLPLIDPR (278 aa)). NAD(+) is bound by residues 63 to 83 (GAGISTESGIPDYRSEKVGLY) and 144 to 147 (QNVD). The active-site Proton acceptor is the histidine 162. Zn(2+)-binding residues include cysteine 170, cysteine 173, cysteine 221, and cysteine 224. NAD(+)-binding positions include 261–263 (GSS), 287–289 (NIG), and cysteine 305.

Belongs to the sirtuin family. Class II subfamily. In terms of assembly, interacts with GLUD1, IDE and SLC25A5. Interacts with DLAT and PDHX. Interacts with MCCC1 (via the biotin carboxylation domain). Interacts with PCCA and PC. Requires Zn(2+) as cofactor.

The protein resides in the mitochondrion matrix. The catalysed reaction is N(6)-[(R)-lipoyl]-L-lysyl-[protein] + NAD(+) + H2O = 2''-O-lipoyl-ADP-D-ribose + nicotinamide + L-lysyl-[protein]. The enzyme catalyses N(6)-biotinyl-L-lysyl-[protein] + NAD(+) + H2O = 2''-O-biotinyl-ADP-D-ribose + nicotinamide + L-lysyl-[protein]. It catalyses the reaction N(6)-acetyl-L-lysyl-[protein] + NAD(+) + H2O = 2''-O-acetyl-ADP-D-ribose + nicotinamide + L-lysyl-[protein]. It carries out the reaction L-cysteinyl-[protein] + NAD(+) = S-(ADP-D-ribosyl)-L-cysteinyl-[protein] + nicotinamide + H(+). In terms of biological role, acts as a NAD-dependent protein lipoamidase, biotinylase, deacetylase and ADP-ribosyl transferase. Catalyzes more efficiently removal of lipoyl- and biotinyl- than acetyl-lysine modifications. Inhibits the pyruvate dehydrogenase complex (PDH) activity via the enzymatic hydrolysis of the lipoamide cofactor from the E2 component, DLAT, in a phosphorylation-independent manner. Catalyzes the transfer of ADP-ribosyl groups onto target proteins, including mitochondrial GLUD1, inhibiting GLUD1 enzyme activity. Acts as a negative regulator of mitochondrial glutamine metabolism by mediating mono ADP-ribosylation of GLUD1: expressed in response to DNA damage and negatively regulates anaplerosis by inhibiting GLUD1, leading to block metabolism of glutamine into tricarboxylic acid cycle and promoting cell cycle arrest. In response to mTORC1 signal, SIRT4 expression is repressed, promoting anaplerosis and cell proliferation. Acts as a tumor suppressor. Also acts as a NAD-dependent protein deacetylase: mediates deacetylation of 'Lys-471' of MLYCD, inhibiting its activity, thereby acting as a regulator of lipid homeostasis. Does not seem to deacetylate PC. Controls fatty acid oxidation by inhibiting PPARA transcriptional activation. Impairs SIRT1-PPARA interaction probably through the regulation of NAD(+) levels. Down-regulates insulin secretion. The chain is NAD-dependent protein lipoamidase sirtuin-4, mitochondrial from Bos taurus (Bovine).